Consider the following 103-residue polypeptide: Entry-fusion complex protein OPG086 (103 aa).

A helical; Signal-anchor transmembrane segment spans residues 1–21 (MTLFLVIFFILFLLLCYFFSF). Residues 22-103 (KRTNKMEIGI…KLVPTLLLSK (82 aa)) lie on the Virion surface side of the membrane.

The protein belongs to the orthopoxvirus OPG086 family. In terms of assembly, interacts with OPG099/L5. Component of the entry fusion complex (EFC) composed of OPG053, OPG076, OPG086, OPG094, OPG095, OPG099, OPG107, OPG143, OPG104, OPG147 and OPG155. Except for OPG095 and OPG053, each of the EFC proteins is required for assembly or stability of the complex. Unglycosylated because produced in viral factories instead of the classic ER -Golgi route.

It localises to the virion membrane. Component of the entry fusion complex (EFC), which consists of 11 proteins. During cell infection, this complex mediates entry of the virion core into the host cytoplasm by a two-step mechanism consisting of lipid mixing of the viral and cellular membranes and subsequent pore formation. The polypeptide is Entry-fusion complex protein OPG086 (OPG086) (Vertebrata (FPV)).